Here is a 451-residue protein sequence, read N- to C-terminus: uncharacterized protein (451 aa).

Residues 1–59 (MLHKNDIIETEISDISHEGMGIAKVDGFVFFVENALPGEIIKMRVLKLRKRIGYGKVEE) form the TRAM domain. 4 residues coordinate S-adenosyl-L-methionine: Gln283, Tyr312, Glu333, and Asp381. Cys408 acts as the Nucleophile in catalysis.

The protein belongs to the class I-like SAM-binding methyltransferase superfamily. RNA M5U methyltransferase family.

This is an uncharacterized protein from Streptococcus agalactiae serotype V (strain ATCC BAA-611 / 2603 V/R).